Consider the following 129-residue polypeptide: uncharacterized protein (129 aa).

Positions 23-101 (KASTSSESCQ…TAATRTTSKK (79 aa)) are disordered. Composition is skewed to basic and acidic residues over residues 31–40 (CQRRGVRDDT) and 67–80 (EGDR…EKEP).

This is an uncharacterized protein from Ictaluridae (bullhead catfishes).